Reading from the N-terminus, the 171-residue chain is AAF/I fimbrial subunit (171 aa).

A signal peptide spans 1-28 (MKTLKNMRRKNLCITLGLVSLLSRGANA).

Its subcellular location is the fimbrium. This Escherichia coli protein is AAF/I fimbrial subunit (aggA).